Here is a 721-residue protein sequence, read N- to C-terminus: mRNA (2'-O-methyladenosine-N(6)-)-methyltransferase (721 aa).

2 stretches are compositionally biased toward polar residues: residues 1 to 10 (MTSENHTTIK) and 19 to 36 (PTGSTSQAAPFSPSTSKP). Residues 1 to 37 (MTSENHTTIKADSALVMSPTGSTSQAAPFSPSTSKPI) are disordered. The 35-residue stretch at 43–77 (ELIQAGWSKCWSKRENRPYYFNRFTNQSLWEMPVL) folds into the WW domain. The disordered stretch occupies residues 93 to 170 (PASGEANADA…KQGQASTPAP (78 aa)). The segment covering 132-148 (IPATPTTPTVPISPSTP) has biased composition (low complexity). The substrate site is built by Arg239 and Arg269. S-adenosyl-L-methionine is bound at residue 558-561 (NPPF). Residues Glu563 and 593-597 (WRDPP) contribute to the substrate site. 619-621 (FEH) contributes to the S-adenosyl-L-methionine binding site. Over residues 675–686 (SGRSLPSPGPSS) the composition is skewed to low complexity. Positions 675–721 (SGRSLPSPGPSSTNTGEKDSKPAPERTAPSQDNSSPVDKTAQDTTNT) are disordered. The span at 702–721 (APSQDNSSPVDKTAQDTTNT) shows a compositional bias: polar residues.

Belongs to the CAPAM family.

It localises to the nucleus. The enzyme catalyses a 5'-end (N(7)-methyl 5'-triphosphoguanosine)-(2'-O-methyladenosine) in mRNA + S-adenosyl-L-methionine = a 5'-end (N(7)-methyl 5'-triphosphoguanosine)-(N(6),2'-O-dimethyladenosine) in mRNA + S-adenosyl-L-homocysteine + H(+). Cap-specific adenosine methyltransferase activity is inhibited by zinc. Cap-specific adenosine methyltransferase that catalyzes formation of N(6),2'-O-dimethyladenosine cap (m6A(m)) by methylating the adenosine at the second transcribed position of capped mRNAs. In Danio rerio (Zebrafish), this protein is mRNA (2'-O-methyladenosine-N(6)-)-methyltransferase (pcif1).